We begin with the raw amino-acid sequence, 22 residues long: Plasticin-TR (22 aa).

The protein belongs to the frog skin active peptide (FSAP) family. Plasticin subfamily. Exhibits a propensity to self-association and forms helical oligomers in membrane-mimetic environments. Expressed by the skin glands.

It is found in the secreted. The protein localises to the target cell membrane. Has no antimicrobial activity against Gram-negative bacterium E.coli ATCC 25922, Gram-positive bacterium S.epidermidis ATCC 12228 and against fungus C.albicans ATCC 24433 at concentrations up to 100 uM. Has an anti-inflammatory effect, since it inhibits the production of the pro-inflammatory cytokines TNF-alpha and IL-1 beta. Has high activity of stimulation of insulin release, which may protect the species from being eaten by predators by causing fatal hypoglycemia. Is not cytotoxic to cancer line cells. Does not show hemolysis on mouse erythrocytes. Adopts a mixture of alpha-helical and beta-sheet structures. This Phyllomedusa trinitatis (Trinidad leaf frog) protein is Plasticin-TR.